The chain runs to 424 residues: Neurotensin receptor type 1 (424 aa).

Over 1 to 67 (MHLNSSVQQG…TDIYSKVLVT (67 aa)) the chain is Extracellular. N-linked (GlcNAc...) asparagine glycosylation is found at N4, N38, and N42. Residues 68–88 (AVYLALFVVGTVGNSVTAFTL) traverse the membrane as a helical segment. Over 89–102 (ARKKSLQSLQSTVH) the chain is Cytoplasmic. A helical membrane pass occupies residues 103 to 122 (YHLGSLALSDLLILLLAMPV). Residues 123–142 (ELYNFIWVHHPWAFGDAGCR) are Extracellular-facing. C141 and C224 are oxidised to a cystine. The chain crosses the membrane as a helical span at residues 143-164 (GYYFLRDACTYATALNVASLSV). Over 165–184 (ERYLAICHPFKAKTLMSRSR) the chain is Cytoplasmic. Residues 185–205 (TKKFISAIWLASALLAVPMLF) form a helical membrane-spanning segment. Topologically, residues 206 to 234 (TMGLQNRSADGQHPGGLVCTPTVDTATVK) are extracellular. The N-linked (GlcNAc...) asparagine glycan is linked to N211. Residues 235-259 (VVIQVNTFMSFLFPMLIISILNTVI) traverse the membrane as a helical segment. The Cytoplasmic segment spans residues 260-308 (ANKLTVMVHQAAEQGRGVCTVGTHNSLEHSTFNMSIEPGRVQALRHGVL). Residues 309-330 (VLRAVVIAFVVCWLPYHVRRLM) form a helical membrane-spanning segment. The tract at residues 326–349 (VRRLMFCYISDEQWTTFLFDFYHY) is neurotensin binding. Residues 331–348 (FCYISDEQWTTFLFDFYH) are Extracellular-facing. The helical transmembrane segment at 349–369 (YFYMLTNALFYVSSAINPILY) threads the bilayer. Residues 370–424 (NLVSANFRQVFLSTLACLCPGWRRRRKKRPTFSRKPNSMSSNHAFSTSATRETLY) lie on the Cytoplasmic side of the membrane. Residues C386 and C388 are each lipidated (S-palmitoyl cysteine). The disordered stretch occupies residues 398 to 424 (RPTFSRKPNSMSSNHAFSTSATRETLY). Residues 403–424 (RKPNSMSSNHAFSTSATRETLY) show a composition bias toward polar residues.

It belongs to the G-protein coupled receptor 1 family. Neurotensin receptor subfamily. NTSR1 sub-subfamily. As to quaternary structure, interacts (palmitoylated form) with GNA11. In terms of processing, N-glycosylated. Post-translationally, palmitoylated; this is required for normal localization at membrane rafts and normal GNA11-mediated activation of down-stream signaling cascades. The palmitoylation level increases in response to neurotensin treatment.

Its subcellular location is the cell membrane. The protein resides in the membrane raft. G-protein coupled receptor for the tridecapeptide neurotensin (NTS). Signaling is effected via G proteins that activate a phosphatidylinositol-calcium second messenger system. Signaling leads to the activation of downstream MAP kinases and protects cells against apoptosis. This is Neurotensin receptor type 1 (Ntsr1) from Mus musculus (Mouse).